The following is a 506-amino-acid chain: Aspartic proteinase A1 (506 aa).

An N-terminal signal peptide occupies residues 1 to 24 (MKIYSRTVAVSLIVSFLLCFSAFA). The propeptide at 25–64 (ERNDGTFRVGLKKLKLDSKNRLAARVESKQEKPLRAYRLG) is activation peptide. One can recognise a Peptidase A1 domain in the interval 82 to 503 (YYGEIAIGTP…DFGNEQVGFA (422 aa)). Asp100 is a catalytic residue. Cystine bridges form between Cys113–Cys119 and Cys278–Cys282. Asp287 is an active-site residue. One can recognise a Saposin B-type domain in the interval 312–417 (VVSQQCKTVV…NELCERLPSP (106 aa)). 4 disulfide bridges follow: Cys317-Cys411, Cys342-Cys383, Cys348-Cys380, and Cys425-Cys462. Residue Asn397 is glycosylated (N-linked (GlcNAc...) asparagine).

The protein belongs to the peptidase A1 family. Expressed in roots, leaves, stems, petals, carpels, seed pods and dry seeds.

The protein localises to the vacuole. Its function is as follows. Involved in the breakdown of propeptides of storage proteins in protein-storage vacuoles. Possesses aspartic protease activity in vitro. This chain is Aspartic proteinase A1 (APA1), found in Arabidopsis thaliana (Mouse-ear cress).